The following is a 259-amino-acid chain: HTH-type quorum sensing-dependent transcriptional regulator VjbR (259 aa).

The segment at 76-179 (KNYFAIDPVF…AGIIHGTVCG (104 aa)) is C12-HSL binding. The region spanning 183–248 (ANSVASLLTP…SAVATALSLG (66 aa)) is the HTH luxR-type domain. The H-T-H motif DNA-binding region spans 207–226 (DGEIAEILSIARWTVVTYLQ).

Functionally, transcriptional regulator involved in the global control of Brucella gene expression. Mediates the effects of the quorum sensing autoinducer C12-HSL (N-dodecanoyl-homoserine lactone) on a large and diverse number of genes. In Brucella suis biovar 1 (strain 1330), this protein is HTH-type quorum sensing-dependent transcriptional regulator VjbR (vjbR).